Here is a 415-residue protein sequence, read N- to C-terminus: Protein CDC73 homolog (415 aa).

It belongs to the CDC73 family. Component of the nuclear PAF1 complex (PAF1C), which consists of VIP2/ELF7/PAF1, VIP3/SKI8/WDR61, VIP4/LEO1, VIP5/RTF1, VIP6/ELF8/CTR9 and CDC73. In terms of tissue distribution, expressed in root tips, shoot apex, young leaves and flowers, especially in stamen filaments and carpels.

It localises to the nucleus. Component of the PAF1 complex (PAF1C) which is involved in histone modifications such as methylation on histone H3 'Lys-4' (H3K4me3). Involved in regulation of flowering time. Required for the expression of the flowering repressors FLC and MADS-box genes of the MAF family. Required for histone H3 trimethylation on 'Lys-4' (H3K4me3) at the FLC locus. Prevents trimethylation on 'Lys-27' (H3K27me3) at the same locus. In Arabidopsis thaliana (Mouse-ear cress), this protein is Protein CDC73 homolog.